A 608-amino-acid chain; its full sequence is Elongation factor 4 (608 aa).

Positions 11-193 (KKIRNFSIIA…QIVEKVPEPS (183 aa)) constitute a tr-type G domain. Residues 23–28 (DHGKST) and 140–143 (NKID) contribute to the GTP site.

It belongs to the TRAFAC class translation factor GTPase superfamily. Classic translation factor GTPase family. LepA subfamily.

It localises to the cell membrane. The enzyme catalyses GTP + H2O = GDP + phosphate + H(+). Its function is as follows. Required for accurate and efficient protein synthesis under certain stress conditions. May act as a fidelity factor of the translation reaction, by catalyzing a one-codon backward translocation of tRNAs on improperly translocated ribosomes. Back-translocation proceeds from a post-translocation (POST) complex to a pre-translocation (PRE) complex, thus giving elongation factor G a second chance to translocate the tRNAs correctly. Binds to ribosomes in a GTP-dependent manner. This chain is Elongation factor 4, found in Listeria monocytogenes serotype 4b (strain CLIP80459).